A 299-amino-acid chain; its full sequence is tRNA dimethylallyltransferase (299 aa).

ATP is bound at residue 13–20 (GPTASGKT). Substrate is bound at residue 15 to 20 (TASGKT). The interaction with substrate tRNA stretch occupies residues 38 to 41 (DSRQ).

The protein belongs to the IPP transferase family. Monomer. It depends on Mg(2+) as a cofactor.

The catalysed reaction is adenosine(37) in tRNA + dimethylallyl diphosphate = N(6)-dimethylallyladenosine(37) in tRNA + diphosphate. In terms of biological role, catalyzes the transfer of a dimethylallyl group onto the adenine at position 37 in tRNAs that read codons beginning with uridine, leading to the formation of N6-(dimethylallyl)adenosine (i(6)A). The polypeptide is tRNA dimethylallyltransferase (Prochlorococcus marinus (strain MIT 9313)).